Here is a 268-residue protein sequence, read N- to C-terminus: Adenosylcobinamide-GDP ribazoletransferase (268 aa).

6 helical membrane passes run 54–74 (IAGL…GVLW), 80–100 (AVVL…DGLS), 124–144 (IGVM…AFLA), 150–170 (WLTA…YGIV), 202–222 (ALAL…VWMV), and 243–263 (GALC…SAPM).

Belongs to the CobS family. Requires Mg(2+) as cofactor.

Its subcellular location is the cell membrane. It catalyses the reaction alpha-ribazole + adenosylcob(III)inamide-GDP = adenosylcob(III)alamin + GMP + H(+). It carries out the reaction alpha-ribazole 5'-phosphate + adenosylcob(III)inamide-GDP = adenosylcob(III)alamin 5'-phosphate + GMP + H(+). It functions in the pathway cofactor biosynthesis; adenosylcobalamin biosynthesis; adenosylcobalamin from cob(II)yrinate a,c-diamide: step 7/7. Functionally, joins adenosylcobinamide-GDP and alpha-ribazole to generate adenosylcobalamin (Ado-cobalamin). Also synthesizes adenosylcobalamin 5'-phosphate from adenosylcobinamide-GDP and alpha-ribazole 5'-phosphate. This Roseiflexus sp. (strain RS-1) protein is Adenosylcobinamide-GDP ribazoletransferase.